The primary structure comprises 1041 residues: Isoleucine--tRNA ligase (1041 aa).

The short motif at 53–63 is the 'HIGH' region element; that stretch reads PFANGLPHYGH. Residues 619 to 623 carry the 'KMSKS' region motif; the sequence is KMSKS. An ATP-binding site is contributed by Lys622.

The protein belongs to the class-I aminoacyl-tRNA synthetase family. IleS type 2 subfamily. As to quaternary structure, monomer. The cofactor is Zn(2+).

It localises to the cytoplasm. It catalyses the reaction tRNA(Ile) + L-isoleucine + ATP = L-isoleucyl-tRNA(Ile) + AMP + diphosphate. Catalyzes the attachment of isoleucine to tRNA(Ile). As IleRS can inadvertently accommodate and process structurally similar amino acids such as valine, to avoid such errors it has two additional distinct tRNA(Ile)-dependent editing activities. One activity is designated as 'pretransfer' editing and involves the hydrolysis of activated Val-AMP. The other activity is designated 'posttransfer' editing and involves deacylation of mischarged Val-tRNA(Ile). This chain is Isoleucine--tRNA ligase (ileS), found in Mycobacterium tuberculosis (strain CDC 1551 / Oshkosh).